Reading from the N-terminus, the 229-residue chain is Large ribosomal subunit protein uL1 (229 aa).

Belongs to the universal ribosomal protein uL1 family. In terms of assembly, part of the 50S ribosomal subunit.

Functionally, binds directly to 23S rRNA. The L1 stalk is quite mobile in the ribosome, and is involved in E site tRNA release. Protein L1 is also a translational repressor protein, it controls the translation of the L11 operon by binding to its mRNA. This is Large ribosomal subunit protein uL1 from Haemophilus influenzae (strain PittEE).